Here is a 152-residue protein sequence, read N- to C-terminus: SsrA-binding protein (152 aa).

This sequence belongs to the SmpB family.

It localises to the cytoplasm. In terms of biological role, required for rescue of stalled ribosomes mediated by trans-translation. Binds to transfer-messenger RNA (tmRNA), required for stable association of tmRNA with ribosomes. tmRNA and SmpB together mimic tRNA shape, replacing the anticodon stem-loop with SmpB. tmRNA is encoded by the ssrA gene; the 2 termini fold to resemble tRNA(Ala) and it encodes a 'tag peptide', a short internal open reading frame. During trans-translation Ala-aminoacylated tmRNA acts like a tRNA, entering the A-site of stalled ribosomes, displacing the stalled mRNA. The ribosome then switches to translate the ORF on the tmRNA; the nascent peptide is terminated with the 'tag peptide' encoded by the tmRNA and targeted for degradation. The ribosome is freed to recommence translation, which seems to be the essential function of trans-translation. The sequence is that of SsrA-binding protein from Rickettsia akari (strain Hartford).